The primary structure comprises 126 residues: MPTINQLVRKGRASETTKSKSPALQDCPQRRGVCTRVYTTTPKKPNSALRKVAKVRLTNGFEVISYIGGEGHNLQEHSVVLIRGGRVKDLPGVRYHMVRGSLDTQGVKDRKQARSKYGAKRAKAGK.

A disordered region spans residues 1–26 (MPTINQLVRKGRASETTKSKSPALQD). 3-methylthioaspartic acid is present on aspartate 89. The tract at residues 103–126 (DTQGVKDRKQARSKYGAKRAKAGK) is disordered. Over residues 113-126 (ARSKYGAKRAKAGK) the composition is skewed to basic residues.

It belongs to the universal ribosomal protein uS12 family. Part of the 30S ribosomal subunit. Contacts proteins S8 and S17. May interact with IF1 in the 30S initiation complex.

In terms of biological role, with S4 and S5 plays an important role in translational accuracy. Functionally, interacts with and stabilizes bases of the 16S rRNA that are involved in tRNA selection in the A site and with the mRNA backbone. Located at the interface of the 30S and 50S subunits, it traverses the body of the 30S subunit contacting proteins on the other side and probably holding the rRNA structure together. The combined cluster of proteins S8, S12 and S17 appears to hold together the shoulder and platform of the 30S subunit. In Paraburkholderia xenovorans (strain LB400), this protein is Small ribosomal subunit protein uS12.